A 110-amino-acid polypeptide reads, in one-letter code: Nucleoid-associated protein RALTA_A1934 (110 aa).

Positions 88 to 98 are enriched in polar residues; the sequence is TTQEKMGSMTS. Residues 88–110 form a disordered region; sequence TTQEKMGSMTSGLPLPPGFKLPF. Over residues 101–110 the composition is skewed to pro residues; sequence PLPPGFKLPF.

The protein belongs to the YbaB/EbfC family. In terms of assembly, homodimer.

It localises to the cytoplasm. The protein localises to the nucleoid. Binds to DNA and alters its conformation. May be involved in regulation of gene expression, nucleoid organization and DNA protection. In Cupriavidus taiwanensis (strain DSM 17343 / BCRC 17206 / CCUG 44338 / CIP 107171 / LMG 19424 / R1) (Ralstonia taiwanensis (strain LMG 19424)), this protein is Nucleoid-associated protein RALTA_A1934.